Here is a 95-residue protein sequence, read N- to C-terminus: DNA-directed RNA polymerase subunit omega (95 aa).

It belongs to the RNA polymerase subunit omega family. In terms of assembly, the RNAP catalytic core consists of 2 alpha, 1 beta, 1 beta' and 1 omega subunit. When a sigma factor is associated with the core the holoenzyme is formed, which can initiate transcription.

It catalyses the reaction RNA(n) + a ribonucleoside 5'-triphosphate = RNA(n+1) + diphosphate. Promotes RNA polymerase assembly. Latches the N- and C-terminal regions of the beta' subunit thereby facilitating its interaction with the beta and alpha subunits. In Colwellia psychrerythraea (strain 34H / ATCC BAA-681) (Vibrio psychroerythus), this protein is DNA-directed RNA polymerase subunit omega.